A 130-amino-acid chain; its full sequence is Holo-[acyl-carrier-protein] synthase (130 aa).

Positions 9 and 58 each coordinate Mg(2+).

This sequence belongs to the P-Pant transferase superfamily. AcpS family. Requires Mg(2+) as cofactor.

The protein resides in the cytoplasm. The enzyme catalyses apo-[ACP] + CoA = holo-[ACP] + adenosine 3',5'-bisphosphate + H(+). Functionally, transfers the 4'-phosphopantetheine moiety from coenzyme A to a Ser of acyl-carrier-protein. The chain is Holo-[acyl-carrier-protein] synthase from Mycobacterium leprae (strain Br4923).